We begin with the raw amino-acid sequence, 505 residues long: Glycerol kinase (505 aa).

ADP is bound at residue T13. Residues T13, T14, and S15 each coordinate ATP. T13 serves as a coordination point for sn-glycerol 3-phosphate. Residue R17 coordinates ADP. Residues R83, E84, Y135, and D247 each contribute to the sn-glycerol 3-phosphate site. Glycerol contacts are provided by R83, E84, Y135, D247, and Q248. 2 residues coordinate ADP: T269 and G313. T269, G313, Q317, and G414 together coordinate ATP. G414 and N418 together coordinate ADP.

This sequence belongs to the FGGY kinase family.

The enzyme catalyses glycerol + ATP = sn-glycerol 3-phosphate + ADP + H(+). It functions in the pathway polyol metabolism; glycerol degradation via glycerol kinase pathway; sn-glycerol 3-phosphate from glycerol: step 1/1. With respect to regulation, inhibited by fructose 1,6-bisphosphate (FBP). Functionally, key enzyme in the regulation of glycerol uptake and metabolism. Catalyzes the phosphorylation of glycerol to yield sn-glycerol 3-phosphate. This Clavibacter michiganensis subsp. michiganensis (strain NCPPB 382) protein is Glycerol kinase.